A 946-amino-acid chain; its full sequence is Villin-4 (946 aa).

4 Gelsolin-like repeats span residues 28 to 109 (NFKP…ETEK), 152 to 219 (VHVK…EDGK), 274 to 339 (LEHE…TIMF), and 641 to 715 (EIHH…PQFF). Disordered stretches follow at residues 744–789 (ATPS…GRSP), 801–832 (PSTRYLSTPPPAVKKLFPRSGGSELPKTSSKQ), and 844–902 (GPTK…PAPD). The span at 765-777 (QDKSQQRTRSMSH) shows a compositional bias: polar residues. Positions 874 to 883 (SENEPEDDEN) are enriched in acidic residues. The HP domain maps to 881–946 (DENSTIYPYE…NRLKSDLQLF (66 aa)).

It belongs to the villin/gelsolin family.

The protein resides in the cytoplasm. It is found in the cytoskeleton. Its function is as follows. Ca(2+)-regulated actin-binding protein. Binds actin microfilaments (MFs). Involved in actin filament bundling, severing and capping. Caps the barbed end of actin filaments and is able to sever them in a calcium-dependent manner. In Oryza sativa subsp. japonica (Rice), this protein is Villin-4.